Here is a 250-residue protein sequence, read N- to C-terminus: Triosephosphate isomerase (250 aa).

Position 9–11 (Asn-9–Lys-11) interacts with substrate. The Electrophile role is filled by His-95. Glu-167 serves as the catalytic Proton acceptor. Residues Gly-173, Ser-213, and Gly-234–Gly-235 contribute to the substrate site.

The protein belongs to the triosephosphate isomerase family. In terms of assembly, homodimer.

It is found in the cytoplasm. It carries out the reaction D-glyceraldehyde 3-phosphate = dihydroxyacetone phosphate. The protein operates within carbohydrate biosynthesis; gluconeogenesis. Its pathway is carbohydrate degradation; glycolysis; D-glyceraldehyde 3-phosphate from glycerone phosphate: step 1/1. Involved in the gluconeogenesis. Catalyzes stereospecifically the conversion of dihydroxyacetone phosphate (DHAP) to D-glyceraldehyde-3-phosphate (G3P). The sequence is that of Triosephosphate isomerase from Exiguobacterium sibiricum (strain DSM 17290 / CCUG 55495 / CIP 109462 / JCM 13490 / 255-15).